The primary structure comprises 143 residues: Large ribosomal subunit protein uL11 (143 aa).

This sequence belongs to the universal ribosomal protein uL11 family. In terms of assembly, part of the ribosomal stalk of the 50S ribosomal subunit. Interacts with L10 and the large rRNA to form the base of the stalk. L10 forms an elongated spine to which L12 dimers bind in a sequential fashion forming a multimeric L10(L12)X complex. In terms of processing, one or more lysine residues are methylated.

Forms part of the ribosomal stalk which helps the ribosome interact with GTP-bound translation factors. This chain is Large ribosomal subunit protein uL11, found in Pseudomonas fluorescens (strain Pf0-1).